An 886-amino-acid chain; its full sequence is MIHTDIAEILCVKPKTTKKTKTMEEDVKKTTTMKIEGEVVVMKKNLLDFKDVMASLLDRVNELLGRRVSLHLISSHQPDPANEKRGRLGKAAHLEKWVTKIKTSVTAEETAFGVTFDWDESMGPPAAFVIKNHHHSQFYLKSLTLRGFPDGEGGATAIHFICNSWIYPNHRYRSDRVFFSNKAYLPSETPELIKELREEELKNLRGNEKGGEFKEWDRVYDYAYYNDLGAPDKGPDSVRPVLGGSPELPYPRRGKTGRKSTKSDPKSESRLALLNLNIYVPRDERFSHVKFSDFLAYALKSVTQVLVPEIASVCDKTINEFDSFEDVFHLYDGSIKLANGHTISKLRDVIPWEMFRELVRNDGERFLKYPLPDILKESRSAWRTDEEFAREMLAGLNPVVISRLQEFPPKSCLDSAKYGNQHSSIRTEHIESNMNGLNVQEALEQNKLYILDHHDALMPYLTRINSTNTKTYATRTLLLLQADGTLKPLAIELSLPHAQGESYGSVSKVFTPAEKGVEGSVWQLAKAYAAVNDSGYHQLISHWLQTHAVIEPFIIASNRQLSVVHPIHKLLHPHFRDTMNINALARHVLINSDGVLERTVFPSRYAMEMSSSIYKNWVFTEQALPKDLLKRGVAVEDPNSDNGVKLLIEDYPFAVDGLEIWSAIKTWVTEYCTFYYNNDKTVQTDTEIQSWWTELRTKGHGDKRHESWWPSMQTRDDLIETCTIIIWIASALHAAVNFGQYPYAGFLPNRPTVSRRFMPEPGTDEYAELEEDADVAFLKTITPQLQTLLGISIIEILSMHSTDEIYLGQRDSPNWTADDEPLEAFKRFGKELELIENNIIRRNNDKRFKNRTGPVNIPYTLLYPNTTDYTREGGITGKGIPNSVSI.

The region spanning 35–180 is the PLAT domain; the sequence is IEGEVVVMKK…RYRSDRVFFS (146 aa). Positions 183–886 constitute a Lipoxygenase domain; sequence AYLPSETPEL…GKGIPNSVSI (704 aa). Residues 234–266 are disordered; that stretch reads GPDSVRPVLGGSPELPYPRRGKTGRKSTKSDPK. Histidine 542, histidine 547, histidine 733, asparagine 737, and isoleucine 886 together coordinate Fe cation.

The protein belongs to the lipoxygenase family. Fe cation is required as a cofactor. Expressed in roots.

The enzyme catalyses (9Z,12Z)-octadecadienoate + O2 = (9S)-hydroperoxy-(10E,12Z)-octadecadienoate. The catalysed reaction is (9Z,12Z,15Z)-octadecatrienoate + O2 = (9S)-hydroperoxy-(10E,12Z,15Z)-octadecatrienoate. The protein operates within lipid metabolism; oxylipin biosynthesis. 9S-lipoxygenase that can use linoleic acid or linolenic acid as substrates. Plant lipoxygenases may be involved in a number of diverse aspects of plant physiology including growth and development, pest resistance, and senescence or responses to wounding. Catalyzes the hydroperoxidation of lipids containing a cis,cis-1,4-pentadiene structure. Function as regulators of root development by controlling the emergence of lateral roots. 9S-lypoxygenase-derived oxylipins may play an antagonistic role to ethylene signaling in the control of responses involving oxidative stress, lipid peroxidation and plant defense. LOX5-derived oxylipins may facilitate performance of green peach aphid (Myzus persicae) on foliage. 9S-lypoxygenase-derived oxylipins are engaged during infection to control the balance between salicylic acid (SA) and jasmonate (JA) signaling to facilitate infection by the fungal pathogen Fusarium graminearum. 9S-lypoxygenase-derived oxylipins activate brassinosteroid signaling to promote cell wall-based defense and limit pathogen infection. Does not seem to contribute to the oxidation of free fatty acids during seed aging. The chain is Linoleate 9S-lipoxygenase 5 from Arabidopsis thaliana (Mouse-ear cress).